The chain runs to 338 residues: Flap endonuclease 1 (338 aa).

Positions 1 to 98 are N-domain; that stretch reads MGTDIGDLLQ…ETLSRRKEVR (98 aa). Mg(2+) contacts are provided by Asp-27, Asp-80, Glu-152, Glu-154, Asp-173, Asp-175, and Asp-236. The tract at residues 116–257 is I-domain; the sequence is AAYKYAQASS…TALKLIKKHG (142 aa). An interaction with PCNA region spans residues 330 to 338; that stretch reads RQKTLDQWF.

It belongs to the XPG/RAD2 endonuclease family. FEN1 subfamily. As to quaternary structure, interacts with PCNA. PCNA stimulates the nuclease activity without altering cleavage specificity. Mg(2+) is required as a cofactor.

In terms of biological role, structure-specific nuclease with 5'-flap endonuclease and 5'-3' exonuclease activities involved in DNA replication and repair. During DNA replication, cleaves the 5'-overhanging flap structure that is generated by displacement synthesis when DNA polymerase encounters the 5'-end of a downstream Okazaki fragment. Binds the unpaired 3'-DNA end and kinks the DNA to facilitate 5' cleavage specificity. Cleaves one nucleotide into the double-stranded DNA from the junction in flap DNA, leaving a nick for ligation. Also involved in the base excision repair (BER) pathway. Acts as a genome stabilization factor that prevents flaps from equilibrating into structures that lead to duplications and deletions. Also possesses 5'-3' exonuclease activity on nicked or gapped double-stranded DNA. The polypeptide is Flap endonuclease 1 (Methanosarcina acetivorans (strain ATCC 35395 / DSM 2834 / JCM 12185 / C2A)).